Reading from the N-terminus, the 173-residue chain is Protein C2 (173 aa).

The segment at 69–85 (CNCHFTIHHECNRGFSH) is a zinc-finger region.

Belongs to the geminiviridae transcriptional activator protein family. As to quaternary structure, monomer. Interacting with and inactivating host adenosine kinase 2 (ADK2) in the cytoplasm. Interacts with and inhibits host SNF1 kinase.

The protein resides in the host cytoplasm. Functionally, acts as a suppressor of RNA-mediated gene silencing, also known as post-transcriptional gene silencing (PTGS), a mechanism of plant viral defense that limits the accumulation of viral RNAs. Suppresses the host RNA silencing by inhibiting adenosine kinase 2 (ADK2), a kinase involved in a general methylation pathway. Also suppresses the host basal defense by interacting with and inhibiting SNF1 kinase, a key regulator of cell metabolism implicated in innate antiviral defense. Determines pathogenicity. The sequence is that of Protein C2 from Beet curly top virus (strain California/Logan) (BCTV).